We begin with the raw amino-acid sequence, 191 residues long: Adenylate kinase (191 aa).

12–17 contacts ATP; the sequence is GSGKTT. An NMP region spans residues 34-63; that stretch reads STGDLLRAESAKKTERGLLIEKFTSQGELV. AMP-binding positions include T35, R40, 61–63, 88–91, and Q95; these read ELV and GYPR. The segment at 130-136 is LID; it reads GRSRGAD. R131 contributes to the ATP binding site. The AMP site is built by R133 and R145. ATP is bound at residue R173.

It belongs to the adenylate kinase family. In terms of assembly, monomer.

It localises to the cytoplasm. It catalyses the reaction AMP + ATP = 2 ADP. It participates in purine metabolism; AMP biosynthesis via salvage pathway; AMP from ADP: step 1/1. In terms of biological role, catalyzes the reversible transfer of the terminal phosphate group between ATP and AMP. Plays an important role in cellular energy homeostasis and in adenine nucleotide metabolism. This chain is Adenylate kinase, found in Helicobacter pylori (strain ATCC 700392 / 26695) (Campylobacter pylori).